Here is a 342-residue protein sequence, read N- to C-terminus: Galactose mutarotase (342 aa).

Ser14 is subject to Phosphoserine. Residues 81–82 (NR), His107, 176–178 (HSY), Asp243, Gln279, and Glu307 contribute to the beta-D-galactose site. The Proton donor role is filled by His176. The active-site Proton acceptor is the Glu307.

This sequence belongs to the aldose epimerase family. In terms of assembly, monomer.

The protein localises to the cytoplasm. The enzyme catalyses alpha-D-galactose = beta-D-galactose. It carries out the reaction alpha-D-glucose = beta-D-glucose. It functions in the pathway carbohydrate metabolism; hexose metabolism. The protein operates within carbohydrate metabolism; galactose metabolism. Mutarotase that catalyzes the interconversion of beta-D-galactose and alpha-D-galactose during galactose metabolism. Beta-D-galactose is metabolized in the liver into glucose 1-phosphate, the primary metabolic fuel, by the action of four enzymes that constitute the Leloir pathway: GALM, GALK1 (galactokinase), GALT (galactose-1-phosphate uridylyltransferase) and GALE (UDP-galactose-4'-epimerase). Involved in the maintenance of the equilibrium between the beta- and alpha-anomers of galactose, therefore ensuring a sufficient supply of the alpha-anomer for GALK1. Also active on D-glucose although shows a preference for galactose over glucose. This is Galactose mutarotase from Mus musculus (Mouse).